We begin with the raw amino-acid sequence, 170 residues long: Cytochrome b6-f complex subunit 4 (170 aa).

Transmembrane regions (helical) follow at residues 36 to 56 (LLYIFPVVILGTIACNVGLAV), 95 to 115 (LLGVLLMVSVPAGLLTVPFLE), and 131 to 151 (TVFLIGTAVALWLGIGATLPI).

It belongs to the cytochrome b family. PetD subfamily. As to quaternary structure, the 4 large subunits of the cytochrome b6-f complex are cytochrome b6, subunit IV (17 kDa polypeptide, petD), cytochrome f and the Rieske protein, while the 4 small subunits are petG, petL, petM and petN. The complex functions as a dimer.

Its subcellular location is the plastid. It localises to the chloroplast thylakoid membrane. In terms of biological role, component of the cytochrome b6-f complex, which mediates electron transfer between photosystem II (PSII) and photosystem I (PSI), cyclic electron flow around PSI, and state transitions. The chain is Cytochrome b6-f complex subunit 4 from Nymphaea alba (White water-lily).